We begin with the raw amino-acid sequence, 382 residues long: Farnesyl diphosphate synthase (382 aa).

Isopentenyl diphosphate-binding residues include K81, R84, and Q120. Mg(2+)-binding residues include D127 and D131. Dimethylallyl diphosphate is bound at residue R136. R137 contributes to the isopentenyl diphosphate binding site. Dimethylallyl diphosphate contacts are provided by K230, T231, Q270, K287, and K296.

The protein belongs to the FPP/GGPP synthase family. Mg(2+) is required as a cofactor.

It localises to the cytoplasm. It catalyses the reaction isopentenyl diphosphate + dimethylallyl diphosphate = (2E)-geranyl diphosphate + diphosphate. It carries out the reaction isopentenyl diphosphate + (2E)-geranyl diphosphate = (2E,6E)-farnesyl diphosphate + diphosphate. It functions in the pathway isoprenoid biosynthesis; farnesyl diphosphate biosynthesis; farnesyl diphosphate from geranyl diphosphate and isopentenyl diphosphate: step 1/1. The protein operates within isoprenoid biosynthesis; geranyl diphosphate biosynthesis; geranyl diphosphate from dimethylallyl diphosphate and isopentenyl diphosphate: step 1/1. Inhibited by aminobisphosphonate drugs (aBP), such as risedronate and alendronate. Functionally, key enzyme in isoprenoid biosynthesis which catalyzes the formation of farnesyl diphosphate (FPP), a sterol precursor. Involved in the inhibition of cell growth. This chain is Farnesyl diphosphate synthase (fps), found in Dictyostelium discoideum (Social amoeba).